The following is a 350-amino-acid chain: Methionine import ATP-binding protein MetN (350 aa).

One can recognise an ABC transporter domain in the interval 2–241 (IQIKNLKKEY…PQAPVTRSFV (240 aa)). Residue 38-45 (GHSGAGKS) participates in ATP binding.

This sequence belongs to the ABC transporter superfamily. Methionine importer (TC 3.A.1.24) family. As to quaternary structure, the complex is composed of two ATP-binding proteins (MetN), two transmembrane proteins (MetI) and a solute-binding protein (MetQ).

It is found in the cell inner membrane. It carries out the reaction L-methionine(out) + ATP + H2O = L-methionine(in) + ADP + phosphate + H(+). The catalysed reaction is D-methionine(out) + ATP + H2O = D-methionine(in) + ADP + phosphate + H(+). Its function is as follows. Part of the ABC transporter complex MetNIQ involved in methionine import. Responsible for energy coupling to the transport system. This is Methionine import ATP-binding protein MetN from Francisella tularensis subsp. tularensis (strain FSC 198).